We begin with the raw amino-acid sequence, 313 residues long: CBK1 kinase activator protein MOB2 (313 aa).

A disordered region spans residues 1–109 (MSFLNTIRGL…KRSSIQTTKS (109 aa)). The span at 23-69 (PSNNAIYSHSNLSGNGLRRTQSPTKFSPSKLSSKGAQGSAAYTSSPT) shows a compositional bias: polar residues. Ser-44, Ser-51, Ser-67, and Ser-97 each carry phosphoserine; by CDC28. Residues 76-97 (QSLQHQDSQSSLQYQQQSGSVS) show a composition bias toward low complexity. The span at 98-109 (PSKRSSIQTTKS) shows a compositional bias: polar residues.

It belongs to the MOB1/phocein family. As to quaternary structure, interacts with protein kinase CBK1 to form the RAM CBK1-MOB2 kinase complex. In terms of processing, phosphorylated by CDC28 at Ser-44, Ser-51, Ser-67, and Ser-97. Phosphorylation occurs during bud emergence and is maintained until the G2/M transition. Dephosphorylated at the end of mitosis. Phosphorylation is required for the maintenance of polarisome components in hyphae.

It is found in the nucleus. Its subcellular location is the cytoplasm. Functions as an activator subunit for the CBK1 protein kinase. Part of the regulation of ACE2 activity and cellular morphogenesis (RAM) signaling network. The RAM network is critically required for hyphal growth as well as normal vegetative growth, and for polarization of lipid rafts and the actin cytoskeleton. It play an essential role in biofilm formation. The RAM network also plays a role in serum- and antifungal azoles-induced activation of ergosterol biosynthesis genes, especially those involved in the late steps of ergosterol biosynthesis. This is CBK1 kinase activator protein MOB2 (MOB2) from Candida albicans (strain SC5314 / ATCC MYA-2876) (Yeast).